The following is a 127-amino-acid chain: Large ribosomal subunit protein eL8 (127 aa).

The protein belongs to the eukaryotic ribosomal protein eL8 family. Part of the 50S ribosomal subunit. Probably part of the RNase P complex.

The protein resides in the cytoplasm. In terms of biological role, multifunctional RNA-binding protein that recognizes the K-turn motif in ribosomal RNA, the RNA component of RNase P, box H/ACA, box C/D and box C'/D' sRNAs. The chain is Large ribosomal subunit protein eL8 from Picrophilus torridus (strain ATCC 700027 / DSM 9790 / JCM 10055 / NBRC 100828 / KAW 2/3).